The primary structure comprises 156 residues: Dynein 16 kDa light chain, flagellar outer arm (156 aa).

Residues 2-116 form the Thioredoxin domain; the sequence is AAGLPPVQYS…LNQQVLSLTP (115 aa). Residues cysteine 37 and cysteine 40 are joined by a disulfide bond.

Consists of at least 3 heavy chains (alpha, beta and gamma), 2 intermediate chains and 8 light chains.

It is found in the cell projection. Its subcellular location is the cilium. It localises to the flagellum. The protein localises to the cytoplasm. The protein resides in the cytoskeleton. It is found in the flagellum axoneme. Its function is as follows. May be involved in regulating the redox state of functionally important thiol groups within dynein. This chain is Dynein 16 kDa light chain, flagellar outer arm, found in Chlamydomonas reinhardtii (Chlamydomonas smithii).